Here is a 531-residue protein sequence, read N- to C-terminus: Peroxinectin A (531 aa).

The N-terminal stretch at 1-21 is a signal peptide; the sequence is MRLNLISFFIIFTILVSISNS. N-linked (GlcNAc...) asparagine glycosylation is present at Asn62. His101 (proton acceptor) is an active-site residue. N-linked (GlcNAc...) asparagine glycans are attached at residues Asn131 and Asn338.

This sequence belongs to the peroxidase family.

The protein resides in the secreted. The catalysed reaction is 2 a phenolic donor + H2O2 = 2 a phenolic radical donor + 2 H2O. This is Peroxinectin A (poxA) from Dictyostelium discoideum (Social amoeba).